The chain runs to 363 residues: Palmitoyltransferase ZDHHC9 (363 aa).

The Cytoplasmic segment spans residues 1-35 (MSVMVVRKKVTRKWEKLPGRNTFCCDGRVMMARQK). A helical transmembrane segment spans residues 36–56 (GIFYLTLFLILGTCTLFFAFE). At 57–63 (CRYLAVQ) the chain is on the lumenal side. Residues 64–84 (LSPAIPVFAAMLFLFSMATLL) traverse the membrane as a helical segment. At 85-183 (RTSFSDPGVI…NCVGKRNYRY (99 aa)) the chain is on the cytoplasmic side. A DHHC domain is found at 139-189 (KYCYTCKIFRPPRASHCSICDNCVERFDHHCPWVGNCVGKRNYRYFYLFIL). C169 (S-palmitoyl cysteine intermediate) is an active-site residue. The helical transmembrane segment at 184–204 (FYLFILSLSLLTIYVFAFNIV) threads the bilayer. Over 205–228 (YVALKSLKIGFLETLKETPGTVLE) the chain is Lumenal. Residues 229-249 (VLICFFTLWSVVGLTGFHTFL) traverse the membrane as a helical segment. The Cytoplasmic segment spans residues 250–363 (VALNQTTNED…PPQEVTEAEK (114 aa)). Positions 303–363 (PLEESGSRPP…PPQEVTEAEK (61 aa)) are disordered. Over residues 310–322 (RPPSTQEASTSLL) the composition is skewed to polar residues. Residues 345 to 355 (EMPPPEPPEPP) show a composition bias toward pro residues.

Belongs to the DHHC palmitoyltransferase family. ERF2/ZDHHC9 subfamily. In terms of assembly, interacts with GOLGA7.

The protein localises to the endoplasmic reticulum membrane. It localises to the golgi apparatus membrane. The enzyme catalyses L-cysteinyl-[protein] + hexadecanoyl-CoA = S-hexadecanoyl-L-cysteinyl-[protein] + CoA. Its function is as follows. Palmitoyltransferase that catalyzes the addition of palmitate onto various protein substrates, such as ADRB2, GSDMD, HRAS, NRAS and CGAS. The ZDHHC9-GOLGA7 complex is a palmitoyltransferase specific for HRAS and NRAS. May have a palmitoyltransferase activity toward the beta-2 adrenergic receptor/ADRB2 and therefore regulate G protein-coupled receptor signaling. Acts as a regulator of innate immunity by catalyzing palmitoylation of CGAS, thereby promoting CGAS homodimerization and cyclic GMP-AMP synthase activity. Activates pyroptosis by catalyzing palmitoylation of gasdermin-D (GSDMD), thereby promoting membrane translocation and pore formation of GSDMD. This is Palmitoyltransferase ZDHHC9 (ZDHHC9) from Bos taurus (Bovine).